Reading from the N-terminus, the 497-residue chain is Cytoplasmic dynein 1 light intermediate chain 2 (497 aa).

ATP is bound at residue 61–68 (GEDGSGKT). Disordered stretches follow at residues 187–206 (PEEG…SGSD), 366–408 (QQES…IKNN), 423–461 (LSKK…TEQC), and 474–497 (QEEL…ENEA). Phosphoserine is present on residues Ser-194, Ser-369, and Ser-377. Arg-383 is subject to Omega-N-methylarginine. Over residues 423–444 (LSKKTGSPGSPSAGGVQSTAKK) the composition is skewed to polar residues. Thr-427 carries the post-translational modification Phosphothreonine. Phosphoserine is present on residues Ser-429 and Ser-432. Residues 476–485 (ELDRMTRKPD) are compositionally biased toward basic and acidic residues. Residues 487–497 (MVTNSSTENEA) are compositionally biased toward polar residues.

Belongs to the dynein light intermediate chain family. In terms of assembly, homodimer. The cytoplasmic dynein 1 complex consists of two catalytic heavy chains (HCs) and a number of non-catalytic subunits presented by intermediate chains (ICs), light intermediate chains (LICs) and light chains (LCs); the composition seems to vary in respect to the IC, LIC and LC composition. The heavy chain homodimer serves as a scaffold for the probable homodimeric assembly of the respective non-catalytic subunits. The ICs and LICs bind directly to the HC dimer and the LCs assemble on the IC dimer. Self-associates. Interacts with DYNC1H1; DYNC1LI1 and DYNC1LI2 bind mutually exclusive to DYNC1H1. As to expression, ubiquitous.

The protein resides in the cytoplasm. It localises to the cytoskeleton. Its function is as follows. Acts as one of several non-catalytic accessory components of the cytoplasmic dynein 1 complex that are thought to be involved in linking dynein to cargos and to adapter proteins that regulate dynein function. Cytoplasmic dynein 1 acts as a motor for the intracellular retrograde motility of vesicles and organelles along microtubules. May play a role in binding dynein to membranous organelles or chromosomes. This Rattus norvegicus (Rat) protein is Cytoplasmic dynein 1 light intermediate chain 2 (Dync1li2).